A 409-amino-acid polypeptide reads, in one-letter code: TNF receptor-associated factor family protein DDB_G0273435/DDB_G0273505 (409 aa).

The segment at cysteine 20 to cysteine 59 adopts an RING-type; degenerate zinc-finger fold. TRAF-type zinc fingers lie at residues lysine 75–asparagine 145 and asparagine 145–serine 201. The stretch at histidine 221–aspartate 250 forms a coiled coil. Residues serine 252 to isoleucine 380 enclose the MATH domain.

Belongs to the TNF receptor-associated factor family. A subfamily.

The protein resides in the cytoplasm. Functionally, probable adapter protein and signal transducer that links members of the tumor necrosis factor receptor family to different signaling pathways by association with the receptor cytoplasmic domain and kinases. The sequence is that of TNF receptor-associated factor family protein DDB_G0273435/DDB_G0273505 from Dictyostelium discoideum (Social amoeba).